The primary structure comprises 252 residues: tRNA (guanine-N(1)-)-methyltransferase (252 aa).

S-adenosyl-L-methionine is bound by residues Gly113 and 133–138 (IGDYVL). Low complexity predominate over residues 229 to 238 (VARPAANAPA). The interval 229-252 (VARPAANAPAKGESQKTPKNKTDG) is disordered. Residues 241–252 (ESQKTPKNKTDG) show a composition bias toward basic and acidic residues.

The protein belongs to the RNA methyltransferase TrmD family. In terms of assembly, homodimer.

It is found in the cytoplasm. It carries out the reaction guanosine(37) in tRNA + S-adenosyl-L-methionine = N(1)-methylguanosine(37) in tRNA + S-adenosyl-L-homocysteine + H(+). Its function is as follows. Specifically methylates guanosine-37 in various tRNAs. In Rhodopseudomonas palustris (strain HaA2), this protein is tRNA (guanine-N(1)-)-methyltransferase.